The following is a 92-amino-acid chain: C-C motif chemokine 4 (92 aa).

A signal peptide spans 1–23 (MKLCVSALSLLLLVAAFCAPGFS). Cystine bridges form between C34-C58 and C35-C74.

This sequence belongs to the intercrine beta (chemokine CC) family. Homodimer.

It is found in the secreted. Functionally, monokine with inflammatory and chemokinetic properties. This is C-C motif chemokine 4 (Ccl4) from Mus musculus (Mouse).